The sequence spans 292 residues: Ribosomal RNA small subunit methyltransferase A (292 aa).

Asn29, Leu31, Gly56, Glu77, Asp102, and Asn127 together coordinate S-adenosyl-L-methionine.

This sequence belongs to the class I-like SAM-binding methyltransferase superfamily. rRNA adenine N(6)-methyltransferase family. RsmA subfamily.

The protein localises to the cytoplasm. The enzyme catalyses adenosine(1518)/adenosine(1519) in 16S rRNA + 4 S-adenosyl-L-methionine = N(6)-dimethyladenosine(1518)/N(6)-dimethyladenosine(1519) in 16S rRNA + 4 S-adenosyl-L-homocysteine + 4 H(+). In terms of biological role, specifically dimethylates two adjacent adenosines (A1518 and A1519) in the loop of a conserved hairpin near the 3'-end of 16S rRNA in the 30S particle. May play a critical role in biogenesis of 30S subunits. In Bacillus pumilus (strain SAFR-032), this protein is Ribosomal RNA small subunit methyltransferase A.